Reading from the N-terminus, the 215-residue chain is MTKTTKTMNPKFYLVLALTAVLASNAYGAVVDIDGNAMFHESYYVLPVIRGRGGGLTLAGRGGQPCPYDIVQESSEVDEGIPVKFSNWRLKVAFVPESQNLNIETDVGATICIQSTYWRVGEFDHERKQYFVVAGPKPEGFGQDSLKSFFKIEKSGEDAYKFVFCPRTCDSGNPKCSDVGIFIDELGVRRLALSDKPFLVMFKKANVTEVSSKTM.

An N-terminal signal peptide occupies residues 1 to 28 (MTKTTKTMNPKFYLVLALTAVLASNAYG). 2 disulfides stabilise this stretch: Cys66/Cys112 and Cys165/Cys176. Residue Asn206 is glycosylated (N-linked (GlcNAc...) asparagine).

This sequence belongs to the protease inhibitor I3 (leguminous Kunitz-type inhibitor) family. Expressed in roots.

It localises to the endoplasmic reticulum. In terms of biological role, exhibits Kunitz trypsin protease inhibitor activity. Involved in modulating programmed cell death (PCD) in plant-pathogen interactions. Can inhibit both serine proteases and cysteine proteases. May be involved in the modulation of the proteases that participate in the hydrolysis of dietary proteins in the gut of spider mites. This Arabidopsis thaliana (Mouse-ear cress) protein is Kunitz trypsin inhibitor 4.